The primary structure comprises 401 residues: Protein KlcB (401 aa).

A disordered region spans residues 253 to 311 (AARSNAKGKAGGRERDPASAETAMRCSTAKADDCKAEAGPVSPEATMPGAGEASCSTAR).

The chain is Protein KlcB (klcB) from Escherichia coli.